A 242-amino-acid chain; its full sequence is Vacuole localized DSC protein 1 (242 aa).

The next 2 membrane-spanning stretches (helical) occupy residues 128 to 148 and 152 to 172; these read PYGF…PTAF and LLLV…INGS.

In terms of assembly, part of the vacuole-localized DSC E3 ligase complex composed of at least TUL1, DSC2, DSC3, UBX3, CDC48 and VLD1.

The protein localises to the vacuole membrane. Its function is as follows. Component of the vacuole-localized DSC E3 ubiquitin ligase complex involved in the targeting of the complex to the vacuole membrane via the AP3 pathway to ubiquinate vacuolar membrane proteins. Competes with GLD1 to determine the subcellular localizations of the DSC complex. The chain is Vacuole localized DSC protein 1 from Saccharomyces cerevisiae (strain ATCC 204508 / S288c) (Baker's yeast).